The following is a 734-amino-acid chain: Terpene cyclase/mutase ntnI (734 aa).

Over residues 1–12 (MQSHIGQWTSTA) the composition is skewed to polar residues. The segment at 1–26 (MQSHIGQWTSTAKGHLSRDENGDEKT) is disordered. Residues 16-26 (LSRDENGDEKT) show a composition bias toward basic and acidic residues. PFTB repeat units follow at residues 130-172 (AIEI…RLLG), 493-534 (LHNA…SGKT), 570-610 (RTRG…ALAG), and 619-668 (SRKG…GLMH).

Belongs to the terpene cyclase/mutase family.

It participates in secondary metabolite biosynthesis; terpenoid biosynthesis. In terms of biological role, terpene cyclase/mutase; part of the gene cluster that mediates the biosynthesis of the meroterpenoids nectripenoids A and B, as well as cochliquninone D and isocochliquninone E. The pathway probably begins with the HR-PKS ntnH that catalyzes two chain-extension steps to form a reduced triketide, which then primes the SAT domain in the NR-PKS ntnG to initiate three more cycles of extension to give a linear hexaketide corresponding to the polyketide part of nectripenoids. The FAD-dependent monooxygenase ntnJ then performs an oxidative decarboxylation at C11 of the ntnH/ntnG product, via an electrophilic aromatic hydroxylation with concomitant ipso-decarboxylation. The membrane-bound polyprenyl transferase ntnF then introduces a farnesyl group before the FAD-dependent monooxygenase ntnK functions as the first epoxidase on terminal C12'-C13' olefin, followed by a second epoxidation on C7'-C8' catalyzed by ntnA. The terpene cyclase/mutase ntnI then initiates the sequential tricyclic ring formation through protonation of the terminal epoxide and catalyzes the regioselective and stereoselective 6/6/6-tricyclic ring formation. The cytochrome P450 monooxygenase ntnM may then hydroxylate C1'. In Nectria sp, this protein is Terpene cyclase/mutase ntnI.